A 499-amino-acid chain; its full sequence is Fumarate hydratase 2 (499 aa).

Residues 19-51 form a disordered region; that stretch reads ADVTLKQEDEQQERRSYSTPFREERDTFGPIQV. The span at 23 to 45 shows a compositional bias: basic and acidic residues; sequence LKQEDEQQERRSYSTPFREERDT. Substrate is bound by residues 134–136, 164–167, 174–176, and threonine 222; these read SGT, HPND, and SSN. The Proton donor/acceptor role is filled by histidine 223. Serine 353 is an active-site residue. Substrate-binding positions include serine 354 and 359 to 361; that span reads KVN.

Belongs to the class-II fumarase/aspartase family. Fumarase subfamily. As to quaternary structure, homotetramer.

Its subcellular location is the cytoplasm. It localises to the cytosol. The enzyme catalyses (S)-malate = fumarate + H2O. Fumarate hydratase activity (fumarate to L-malate) is strongly inhibited by phosphoenolpyruvate, citrate, oxaloacetate, ATP and ADP. Malate dehydratase activity (malate to fumarate) is activated by oxaloacetate, Asn and Gln. Malate dehydratase activity (malate to fumarate) is inhibited by citrate, succinate, ADP and ATP. Functionally, cytosolic fumarate hydratase that catalyzes the reversible stereospecific interconversion of fumarate to L-malate. Catalyzes the dehydration of L-malate to fumarate in the cytosol: required for the massive fumarate accumulation during the day in plants grown under high nitrogen. Also required for acclimation of photosynthesis to cold: acts by mediating accumulation of fumarate at low temperature, leading to reduce accumulation of phosphorylated sugars. In Arabidopsis thaliana (Mouse-ear cress), this protein is Fumarate hydratase 2.